The primary structure comprises 317 residues: Membrane-associated protein VIPP1, chloroplastic (317 aa).

The stretch at 92–246 forms a coiled coil; sequence EMNDDLTKMR…SQAEALGQLA (155 aa). Positions 265–317 are disordered; sequence DLAQMKKEISGSSSKGELPPGRTAVSNSGAARPFRDIEIENELNELRKKANEY. Basic and acidic residues predominate over residues 297 to 317; it reads PFRDIEIENELNELRKKANEY.

This sequence belongs to the PspA/Vipp/IM30 family. In terms of assembly, homomultimer. Complex formation involves interaction via the central alpha-helical domain (71-286). As to quaternary structure, (Microbial infection) Interacts with the rice tungro bacilliform virus (RTBV) capsid protein.

Its subcellular location is the plastid. It is found in the chloroplast inner membrane. It localises to the chloroplast thylakoid membrane. Functionally, required for plastid vesicle formation and thylakoid membrane biogenesis, but not for functional assembly of thylakoid protein complexes. This Oryza sativa subsp. japonica (Rice) protein is Membrane-associated protein VIPP1, chloroplastic.